A 327-amino-acid chain; its full sequence is Gibberellin 2-beta-dioxygenase 3 (327 aa).

Residues 173–278 (GSDQVFRVNH…RVSFIYFGGP (106 aa)) form the Fe2OG dioxygenase domain. Tyr183 contributes to the 2-oxoglutarate binding site. Positions 202, 204, and 259 each coordinate Fe cation. 2 residues coordinate 2-oxoglutarate: Arg269 and Ser271.

This sequence belongs to the iron/ascorbate-dependent oxidoreductase family. GA2OX subfamily. Requires L-ascorbate as cofactor. It depends on Fe(2+) as a cofactor. In terms of tissue distribution, expressed in roots, shoot apex, leaf blades, leaf sheaths, stems and flowers.

It carries out the reaction gibberellin A1 + 2-oxoglutarate + O2 = gibberellin A8 + succinate + CO2. Catalyzes the 2-beta-hydroxylation of several biologically active gibberellins, leading to the homeostatic regulation of their endogenous level. Catabolism of gibberellins (GAs) plays a central role in plant development. In vitro, converts GA1, GA20, and GA29 to the corresponding 2-beta-hydroxylated products GA8, GA29-catabolite, respectively. The chain is Gibberellin 2-beta-dioxygenase 3 from Oryza sativa subsp. japonica (Rice).